The following is a 200-amino-acid chain: MEQILYNQSLKISTLSTFQGLKFLKVLIFSIFQQLFYNPVIQLFGTKASIMESDSTTLLESSWSTERNFLNMNSDSISATKNVFILFFTIFRLAEYIVYKLSDQKYRLHTSLNVQHFRWNSKKNTNRKRTLSFSKAYLPRTNILPIFVADGLKNRFSGPLPGKSLESFQKLNLLSDNNIKRYAVPGNKAVNTLLWQEQYS.

This is an uncharacterized protein from Saccharomyces cerevisiae (strain ATCC 204508 / S288c) (Baker's yeast).